The primary structure comprises 222 residues: Charged multivesicular body protein 4a (222 aa).

Disordered regions lie at residues 1 to 21 (MSGL…TPEE) and 177 to 222 (LLHV…EWVS). The tract at residues 1–116 (MSGLGRLFGR…ELAAQGLKKA (116 aa)) is interaction with phosphoinosides. The tract at residues 1–150 (MSGLGRLFGR…QISDAISRPV (150 aa)) is intramolecular interaction with C-terminus. Coiled-coil stretches lie at residues 20 to 105 (EEAI…VLRT) and 155 to 180 (DVDE…LLHV). The interval 151–222 (GFGDDVDEDE…ELKQLAEWVS (72 aa)) is intramolecular interaction with N-terminus. Serine 196 bears the Phosphoserine mark.

It belongs to the SNF7 family. In terms of assembly, probable core component of the endosomal sorting required for transport complex III (ESCRT-III). ESCRT-III components are thought to multimerize to form a flat lattice on the perimeter membrane of the endosome. Several assembly forms of ESCRT-III may exist that interact and act sequentially. Self-associates; overexpression leads to the assembly of filaments that curve and associate to create circular rings. Interacts with CHMP2A. Interacts with CHMP3; the interaction requires the release of CHMP4A autoinhibition. Interacts with CHMP4B. Interacts with CHMP4C. Interacts with CHMP6. Interacts with VPS4A. Interacts with PDCD6IP; the interaction is direct.

The protein localises to the cytoplasmic vesicle membrane. The protein resides in the late endosome membrane. Its function is as follows. Probable core component of the endosomal sorting required for transport complex III (ESCRT-III) which is involved in multivesicular bodies (MVBs) formation and sorting of endosomal cargo proteins into MVBs. MVBs contain intraluminal vesicles (ILVs) that are generated by invagination and scission from the limiting membrane of the endosome and mostly are delivered to lysosomes enabling degradation of membrane proteins, such as stimulated growth factor receptors, lysosomal enzymes and lipids. The MVB pathway appears to require the sequential function of ESCRT-O, -I,-II and -III complexes. ESCRT-III proteins mostly dissociate from the invaginating membrane before the ILV is released. The ESCRT machinery also functions in topologically equivalent membrane fission events, such as the terminal stages of cytokinesis and the budding of enveloped viruses (lentiviruses). ESCRT-III proteins are believed to mediate the necessary vesicle extrusion and/or membrane fission activities, possibly in conjunction with the AAA ATPase VPS4. When overexpressed, membrane-assembled circular arrays of CHMP4A filaments can promote or stabilize negative curvature and outward budding. CHMP4A/B/C are required for the exosomal release of SDCBP, CD63 and syndecan. This chain is Charged multivesicular body protein 4a (CHMP4A), found in Bos taurus (Bovine).